The primary structure comprises 261 residues: Carnitinyl-CoA dehydratase (261 aa).

Residue E111 is the Nucleophile of the active site. E131 serves as the catalytic Proton acceptor.

It belongs to the enoyl-CoA hydratase/isomerase family.

It carries out the reaction (R)-carnitinyl-CoA = crotonobetainyl-CoA + H2O. Its pathway is amine and polyamine metabolism; carnitine metabolism. Its function is as follows. Catalyzes the reversible dehydration of L-carnitinyl-CoA to crotonobetainyl-CoA. This Salmonella enteritidis PT4 (strain P125109) protein is Carnitinyl-CoA dehydratase.